A 128-amino-acid polypeptide reads, in one-letter code: Holo-[acyl-carrier-protein] synthase (128 aa).

Residues Asp9 and Glu56 each coordinate Mg(2+).

It belongs to the P-Pant transferase superfamily. AcpS family. The cofactor is Mg(2+).

The protein resides in the cytoplasm. The catalysed reaction is apo-[ACP] + CoA = holo-[ACP] + adenosine 3',5'-bisphosphate + H(+). Transfers the 4'-phosphopantetheine moiety from coenzyme A to a Ser of acyl-carrier-protein. In Pelagibacter ubique (strain HTCC1062), this protein is Holo-[acyl-carrier-protein] synthase.